A 375-amino-acid chain; its full sequence is Meiotic driver cw27 (375 aa).

2 disordered regions span residues 1–42 (MKNK…STLP) and 74–103 (DYDENRLLITDEGNNPPNTHRENHSSGTTD). Over residues 11–29 (SMDELSTKNDNEIDLEKGP) the composition is skewed to basic and acidic residues. The next 7 membrane-spanning stretches (helical) occupy residues 108–128 (FLIKLLISFTSIILFNAPAVC), 145–165 (WTLIGFWCASSLIIFTFSWCF), 172–192 (AVKVTVIFLAQCIKVTAISLA), 208–228 (EMMIIIWILWLIICCILFGCV), 245–265 (TISAVLFLIVSSVCIPIWTLW), 272–292 (LQVLGIHGIIALLVNGLMSLF), and 336–356 (VIGFILGGIANAIGGIANAIG).

This sequence belongs to the WTF family. Homomer. Forms protein aggregates. The two isoforms can interact with each other and with themselves. High sequence similarity is required for their interaction.

It localises to the spore membrane. It is found in the vacuole. The protein localises to the membrane. The protein resides in the ascus epiplasm. Its subcellular location is the cytoplasm. It localises to the endoplasmic reticulum. Functionally, promotes unequal transmission of alleles from the parental zygote to progeny spores by acting as poison/antidote system where the poison and antidote proteins are produced from the same locus; the poison component is trans-acting and targets all spores within an ascus whereas the antidote component is spore-specific, leading to poisoning of all progeny that do not inherit the allele. Its function is as follows. Localizes isoform 2 to the vacuole thereby facilitating its degradation. In terms of biological role, forms toxic aggregates that disrupt spore maturation. This chain is Meiotic driver cw27, found in Schizosaccharomyces pombe (Fission yeast).